The following is a 195-amino-acid chain: ATP-dependent Clp protease proteolytic subunit 2 (195 aa).

The Nucleophile role is filled by Ser95. Residue His120 is part of the active site.

This sequence belongs to the peptidase S14 family. As to quaternary structure, fourteen ClpP subunits assemble into 2 heptameric rings which stack back to back to give a disk-like structure with a central cavity, resembling the structure of eukaryotic proteasomes.

It is found in the cytoplasm. The enzyme catalyses Hydrolysis of proteins to small peptides in the presence of ATP and magnesium. alpha-casein is the usual test substrate. In the absence of ATP, only oligopeptides shorter than five residues are hydrolyzed (such as succinyl-Leu-Tyr-|-NHMec, and Leu-Tyr-Leu-|-Tyr-Trp, in which cleavage of the -Tyr-|-Leu- and -Tyr-|-Trp bonds also occurs).. In terms of biological role, cleaves peptides in various proteins in a process that requires ATP hydrolysis. Has a chymotrypsin-like activity. Plays a major role in the degradation of misfolded proteins. This chain is ATP-dependent Clp protease proteolytic subunit 2, found in Methylococcus capsulatus (strain ATCC 33009 / NCIMB 11132 / Bath).